The primary structure comprises 386 residues: WD repeat-containing protein 89 (386 aa).

WD repeat units follow at residues 21–65 (KEPT…VIRE), 68–106 (GYPGLNGVKFANSHDSVYSSCTDGTVKCWDARLASGKPV), 111–155 (GYPS…QDLS), 167–207 (THSD…EDDA), 213–253 (NSVS…TDEP), and 318–357 (GHAATVRSFCWNMQDDSLLTGGEDAQLLLWKPGAVEKTFT).

The chain is WD repeat-containing protein 89 (WDR89) from Bos taurus (Bovine).